The sequence spans 187 residues: UPF0232 protein MMAR_0004 (187 aa).

Disordered regions lie at residues Met1–Gly77 and Ala166–Gly187. Positions Ala14–Ala30 are enriched in basic and acidic residues. Over residues Glu31 to Arg55 the composition is skewed to low complexity.

Belongs to the UPF0232 family.

In Mycobacterium marinum (strain ATCC BAA-535 / M), this protein is UPF0232 protein MMAR_0004.